The sequence spans 503 residues: U6 snRNA (guanine-N(2))-methyltransferase THUMPD2 (503 aa).

Residues 161-266 (CQLEKQIKEE…DIYSVVGIPV (106 aa)) enclose the THUMP domain.

It belongs to the methyltransferase superfamily. As to quaternary structure, part of the heterodimeric THUMPD2-TRM112 methyltransferase complex; this complex forms an active tRNA methyltransferase, where TRMT112 acts as an activator of the catalytic subunit THUMPD2. As to expression, expressed in a variety of tissues including brain, colon, gingiva, heart, kidney, liver, lung, placenta, small intestine, spleen and thymus.

The protein localises to the nucleus. It carries out the reaction guanosine in U6 snRNA + S-adenosyl-L-methionine = N(2)-methylguanosine in U6 snRNA + S-adenosyl-L-homocysteine + H(+). In terms of biological role, catalytic subunit of the THUMPD2-TRM112 methyltransferase complex, that specifically mediates the S-adenosyl-L-methionine-dependent N(2)-methylation of guanosine nucleotides, most probably at position 72 (m2G72), in the U6snRNA of the major spliceosome. This modification in the U6 snRNA affects the constitutive splicing efficiency of introns that have suboptimal splice sites and can impact final mRNA levels. The protein is U6 snRNA (guanine-N(2))-methyltransferase THUMPD2 of Homo sapiens (Human).